Consider the following 131-residue polypeptide: Small ribosomal subunit protein uS12 (131 aa).

Aspartate 89 carries the post-translational modification 3-methylthioaspartic acid.

The protein belongs to the universal ribosomal protein uS12 family. As to quaternary structure, part of the 30S ribosomal subunit. Contacts proteins S8 and S17. May interact with IF1 in the 30S initiation complex.

In terms of biological role, with S4 and S5 plays an important role in translational accuracy. Its function is as follows. Interacts with and stabilizes bases of the 16S rRNA that are involved in tRNA selection in the A site and with the mRNA backbone. Located at the interface of the 30S and 50S subunits, it traverses the body of the 30S subunit contacting proteins on the other side and probably holding the rRNA structure together. The combined cluster of proteins S8, S12 and S17 appears to hold together the shoulder and platform of the 30S subunit. This chain is Small ribosomal subunit protein uS12, found in Campylobacter concisus (strain 13826).